The primary structure comprises 975 residues: E3 ubiquitin-protein ligase BRE1A (975 aa).

The interval 1–37 is disordered; sequence MSGIGSKRAAGEPGTSVPPEKKTAVEDSGTTVETIKL. Lys-21 is subject to N6-acetyllysine. At Ser-41 the chain carries Phosphoserine. Residues 43–90 adopt a coiled-coil conformation; that stretch reads TEELDIRTLQTKNRKLAEMLDQRQAIEDELREHIEKLERRQATDDASL. Residues 125–155 are disordered; the sequence is KALVVPEPEPDSDSNQERKDDRERGEGQEPA. Phosphoserine occurs at positions 136 and 138. Positions 139 to 151 are enriched in basic and acidic residues; that stretch reads NQERKDDRERGEG. 2 coiled-coil regions span residues 168–375 and 429–898; these read EEME…EEVV and SLHK…TTKK. 2 positions are modified to N6-acetyllysine: Lys-348 and Lys-510. The segment at 507–622 is disordered; that stretch reads DLNKTRLRSG…GKHDDGRKKE (116 aa). At Ser-522 the chain carries Phosphoserine. A compositionally biased stretch (basic and acidic residues) spans 527–540; the sequence is EDPKDEPAELKQDS. Residues 543–552 show a composition bias toward polar residues; the sequence is LATQSAASKA. Positions 558 to 622 are enriched in basic and acidic residues; it reads NEIKSKRDEE…GKHDDGRKKE (65 aa). Position 562 is a phosphoserine (Ser-562). The segment at 922-961 adopts an RING-type zinc-finger fold; sequence CPCCNMRKKDAVLTKCFHVFCFECVKTRYDTRQRKCPKCN.

This sequence belongs to the BRE1 family. In terms of assembly, component of the RNF20/40 complex (also known as BRE1 complex) probably composed of 2 copies of RNF20/BRE1A and 2 copies of RNF40/BRE1B. Interacts with UBE2E1/UBCH6. Interacts with p53/TP53 and WAC. Interacts with PAF1; the interaction mediates the association of the PAF1 and RNF20/40 complexes which is a prerequsite for recruitment of UBE2A/B. Interacts with PA2G4. Interacts with FBXL19.

The protein localises to the nucleus. It carries out the reaction S-ubiquitinyl-[E2 ubiquitin-conjugating enzyme]-L-cysteine + [acceptor protein]-L-lysine = [E2 ubiquitin-conjugating enzyme]-L-cysteine + N(6)-ubiquitinyl-[acceptor protein]-L-lysine.. Its pathway is protein modification; protein ubiquitination. In terms of biological role, component of the RNF20/40 E3 ubiquitin-protein ligase complex that mediates monoubiquitination of 'Lys-120' of histone H2B (H2BK120ub1). H2BK120ub1 gives a specific tag for epigenetic transcriptional activation and is also prerequisite for histone H3 'Lys-4' and 'Lys-79' methylation (H3K4me and H3K79me, respectively). It thereby plays a central role in histone code and gene regulation. The RNF20/40 complex forms a H2B ubiquitin ligase complex in cooperation with the E2 enzyme UBE2A or UBE2B; reports about the cooperation with UBE2E1/UBCH are contradictory. Required for transcriptional activation of Hox genes. Recruited to the MDM2 promoter, probably by being recruited by p53/TP53, and thereby acts as a transcriptional coactivator. Mediates the polyubiquitination of PA2G4 leading to its proteasome-mediated degradation. This Bos taurus (Bovine) protein is E3 ubiquitin-protein ligase BRE1A (RNF20).